The chain runs to 448 residues: Chaperone SurA (448 aa).

An N-terminal signal peptide occupies residues 1-27 (MKKTLRFAAVAAGLVASLITVAPSASA). 2 PpiC domains span residues 185 to 288 (QQDL…RLVD) and 301 to 399 (IVQT…QVLG). Positions 230–249 (LAKSQSEADDAKKGGDLGFK) are disordered.

Its subcellular location is the periplasm. The enzyme catalyses [protein]-peptidylproline (omega=180) = [protein]-peptidylproline (omega=0). Its function is as follows. Chaperone involved in the correct folding and assembly of outer membrane proteins. Recognizes specific patterns of aromatic residues and the orientation of their side chains, which are found more frequently in integral outer membrane proteins. May act in both early periplasmic and late outer membrane-associated steps of protein maturation. The sequence is that of Chaperone SurA from Burkholderia thailandensis (strain ATCC 700388 / DSM 13276 / CCUG 48851 / CIP 106301 / E264).